Here is a 381-residue protein sequence, read N- to C-terminus: Pulmonary surfactant-associated protein B (381 aa).

The signal sequence occupies residues 1–24 (MAESHLLQWLLLLLPTLCGPGTAA). In terms of domain architecture, Saposin A-type spans 25–65 (WTTSSLACAQGPEFWCQSLEQALQCRALGHCLQEVWGHVGA). Positions 25–200 (WTTSSLACAQ…PHTQDLSEQQ (176 aa)) are excised as a propeptide. Saposin B-type domains are found at residues 65 to 147 (ADDL…KSRQ), 204 to 281 (PLPY…SMDD), and 295 to 370 (RDSE…GTMS). Intrachain disulfides connect C69–C143, C72–C137, C100–C112, C208–C277, C211–C271, C235–C246, C299–C366, C302–C360, and C325–C335. N129 is a glycosylation site (N-linked (GlcNAc...) asparagine). The propeptide occupies 280–381 (DDSAGPRSPT…PLQCIHSPDL (102 aa)). N311 carries N-linked (GlcNAc...) asparagine glycosylation.

Homodimer; disulfide-linked.

It is found in the secreted. The protein resides in the extracellular space. Its subcellular location is the surface film. Pulmonary surfactant-associated proteins promote alveolar stability by lowering the surface tension at the air-liquid interface in the peripheral air spaces. SP-B increases the collapse pressure of palmitic acid to nearly 70 millinewtons per meter. The sequence is that of Pulmonary surfactant-associated protein B (SFTPB) from Homo sapiens (Human).